A 332-amino-acid polypeptide reads, in one-letter code: Holliday junction branch migration complex subunit RuvB (332 aa).

The tract at residues Met1–Tyr182 is large ATPase domain (RuvB-L). Residues Leu21, Arg22, Gly63, Lys66, Thr67, Thr68, Glu129–Tyr131, Arg172, Tyr182, and Arg219 contribute to the ATP site. Residue Thr67 participates in Mg(2+) binding. Positions Ser183–Thr253 are small ATPAse domain (RuvB-S). The tract at residues Lys256–Lys332 is head domain (RuvB-H). Positions 311 and 316 each coordinate DNA.

The protein belongs to the RuvB family. As to quaternary structure, homohexamer. Forms an RuvA(8)-RuvB(12)-Holliday junction (HJ) complex. HJ DNA is sandwiched between 2 RuvA tetramers; dsDNA enters through RuvA and exits via RuvB. An RuvB hexamer assembles on each DNA strand where it exits the tetramer. Each RuvB hexamer is contacted by two RuvA subunits (via domain III) on 2 adjacent RuvB subunits; this complex drives branch migration. In the full resolvosome a probable DNA-RuvA(4)-RuvB(12)-RuvC(2) complex forms which resolves the HJ.

The protein localises to the cytoplasm. The enzyme catalyses ATP + H2O = ADP + phosphate + H(+). The RuvA-RuvB-RuvC complex processes Holliday junction (HJ) DNA during genetic recombination and DNA repair, while the RuvA-RuvB complex plays an important role in the rescue of blocked DNA replication forks via replication fork reversal (RFR). RuvA specifically binds to HJ cruciform DNA, conferring on it an open structure. The RuvB hexamer acts as an ATP-dependent pump, pulling dsDNA into and through the RuvAB complex. RuvB forms 2 homohexamers on either side of HJ DNA bound by 1 or 2 RuvA tetramers; 4 subunits per hexamer contact DNA at a time. Coordinated motions by a converter formed by DNA-disengaged RuvB subunits stimulates ATP hydrolysis and nucleotide exchange. Immobilization of the converter enables RuvB to convert the ATP-contained energy into a lever motion, pulling 2 nucleotides of DNA out of the RuvA tetramer per ATP hydrolyzed, thus driving DNA branch migration. The RuvB motors rotate together with the DNA substrate, which together with the progressing nucleotide cycle form the mechanistic basis for DNA recombination by continuous HJ branch migration. Branch migration allows RuvC to scan DNA until it finds its consensus sequence, where it cleaves and resolves cruciform DNA. This Phytoplasma mali (strain AT) protein is Holliday junction branch migration complex subunit RuvB.